Reading from the N-terminus, the 3354-residue chain is Cadherin-23 (3354 aa).

Residues 1–23 (MGRHVATSCHVAWLLVLISGCWG) form the signal peptide. The Extracellular segment spans residues 24–3064 (QVNRLPFFTN…SVRLPDDMSA (3041 aa)). 27 Cadherin domains span residues 34–132 (HFFD…APTF), 133–236 (HNQP…DPIF), 237–348 (INLP…APEF), 349–460 (NSSE…RPIF), 461–561 (SQPL…VPTF), 562–671 (QKDA…PPTF), 672–784 (SKPA…APYY), 779–890 (KDAP…DPTF), 891–995 (QNLP…TPTF), 996–1102 (FPAV…RPIF), 1103–1208 (LQSS…APVF), 1210–1313 (QQQY…AVQF), 1314–1418 (SNAS…SPRF), 1420–1527 (FTSD…PPVI), 1529–1634 (SPFG…APMF), 1635–1744 (QQPH…VPTF), 1745–1851 (PRDY…DPVL), 1852–1959 (LNLP…HPLF), 1960–2069 (TKST…RPTF), 2070–2174 (SPAT…RPEF), 2175–2293 (LNPI…TPQF), 2297–2402 (GITY…NPIF), 2403–2509 (DQPS…RPQF), 2510–2611 (SKPQ…RPVF), 2614–2722 (PPNG…EPLF), 2729–2846 (SPQY…PPRF), and 2847–2975 (TKAE…EEEF). N-linked (GlcNAc...) asparagine glycans are attached at residues asparagine 155 and asparagine 206. Residues asparagine 349, asparagine 393, asparagine 434, asparagine 466, asparagine 472, asparagine 652, asparagine 694, asparagine 765, asparagine 810, asparagine 827, asparagine 941, asparagine 1001, asparagine 1018, asparagine 1171, asparagine 1282, asparagine 1315, asparagine 1473, asparagine 1534, asparagine 1651, asparagine 1667, asparagine 1818, asparagine 1857, asparagine 1889, asparagine 1902, asparagine 2013, asparagine 2050, asparagine 2129, asparagine 2168, asparagine 2195, asparagine 2263, asparagine 2357, and asparagine 2369 are each glycosylated (N-linked (GlcNAc...) asparagine). 7 N-linked (GlcNAc...) asparagine glycosylation sites follow: asparagine 2616, asparagine 2749, asparagine 2808, asparagine 2877, asparagine 2896, asparagine 2941, and asparagine 2981. The helical transmembrane segment at 3065–3085 (LQMAIIVLAILLFLAAMLFVL) threads the bilayer. Residues 3086 to 3354 (MNWYYRTVHK…METPLEITEL (269 aa)) are Cytoplasmic-facing.

Antiparallel heterodimer with PCDH15. Interacts with USH1C and USH1G. In terms of tissue distribution, particularly strong expression in the retina. Found also in the cochlea.

The protein localises to the cell membrane. In terms of biological role, cadherins are calcium-dependent cell adhesion proteins. They preferentially interact with themselves in a homophilic manner in connecting cells. CDH23 is required for establishing and/or maintaining the proper organization of the stereocilia bundle of hair cells in the cochlea and the vestibule during late embryonic/early postnatal development. It is part of the functional network formed by USH1C, USH1G, CDH23 and MYO7A that mediates mechanotransduction in cochlear hair cells. Required for normal hearing. In Homo sapiens (Human), this protein is Cadherin-23.